The sequence spans 656 residues: Membrane-associated tyrosine- and threonine-specific cdc2-inhibitory kinase wee-1.3 (656 aa).

Residues 1–11 (MDETENNTSID) are compositionally biased toward polar residues. Positions 1-24 (MDETENNTSIDSVEVGPSSPRVVA) are disordered. Positions 107–354 (FQIDEIIGRG…SDALRKHLSI (248 aa)) constitute a Protein kinase domain. Residues 113–121 (IGRGSFGEV) and K136 contribute to the ATP site. The active-site Proton acceptor is D227. Mg(2+) contacts are provided by N232 and D245. Disordered stretches follow at residues 449 to 552 (PFDF…NSSI) and 617 to 656 (KGKE…GDEN). Positions 486–505 (ATCSSSNSSAIETAEDSLSS) are enriched in polar residues. A compositionally biased stretch (basic and acidic residues) spans 617-631 (KGKEKPVVEPAELRQ). Polar residues predominate over residues 646–656 (ASFQGSSGDEN).

Belongs to the protein kinase superfamily. Ser/Thr protein kinase family. WEE1 subfamily.

It is found in the golgi apparatus membrane. It localises to the cytoplasm. It catalyses the reaction L-seryl-[protein] + ATP = O-phospho-L-seryl-[protein] + ADP + H(+). The enzyme catalyses L-threonyl-[protein] + ATP = O-phospho-L-threonyl-[protein] + ADP + H(+). Functionally, acts as a negative regulator of entry into mitosis (G2 to M transition) by phosphorylation of the CDK1 kinase during oocyte maturation. Required for embryonic development, germline proliferation and initiation of meiosis during spermatogenesis. Required for chromosome structure during mitosis and negative regulation of nuclear envelope breakdown. The chain is Membrane-associated tyrosine- and threonine-specific cdc2-inhibitory kinase wee-1.3 from Caenorhabditis briggsae.